The sequence spans 890 residues: DNA mismatch repair protein MutS (890 aa).

645–652 (GPNMAGKS) serves as a coordination point for ATP.

The protein belongs to the DNA mismatch repair MutS family.

Its function is as follows. This protein is involved in the repair of mismatches in DNA. It is possible that it carries out the mismatch recognition step. This protein has a weak ATPase activity. The sequence is that of DNA mismatch repair protein MutS from Rickettsia rickettsii (strain Iowa).